A 158-amino-acid chain; its full sequence is Phosphopantetheine adenylyltransferase (158 aa).

Thr-9 is a binding site for substrate. ATP contacts are provided by residues 9–10 (TF) and His-17. Residues Lys-41, Leu-73, and Arg-87 each coordinate substrate. ATP is bound by residues 88-90 (GLR), Glu-98, and 123-129 (YAYISSS).

This sequence belongs to the bacterial CoaD family. In terms of assembly, homohexamer. Mg(2+) serves as cofactor.

It is found in the cytoplasm. It catalyses the reaction (R)-4'-phosphopantetheine + ATP + H(+) = 3'-dephospho-CoA + diphosphate. It participates in cofactor biosynthesis; coenzyme A biosynthesis; CoA from (R)-pantothenate: step 4/5. Functionally, reversibly transfers an adenylyl group from ATP to 4'-phosphopantetheine, yielding dephospho-CoA (dPCoA) and pyrophosphate. The protein is Phosphopantetheine adenylyltransferase of Allochromatium vinosum (strain ATCC 17899 / DSM 180 / NBRC 103801 / NCIMB 10441 / D) (Chromatium vinosum).